A 166-amino-acid polypeptide reads, in one-letter code: Olee1-like protein (166 aa).

The N-terminal stretch at 1 to 23 (MAKSIIIQAPALCFLSLLGFAYS) is a signal peptide. Intrachain disulfides connect C35–C106, C38–C150, and C59–C94.

This sequence belongs to the Ole e I family.

The protein localises to the secreted. The polypeptide is Olee1-like protein (Betula pendula (European white birch)).